The sequence spans 445 residues: MPPSAASEGGVAELRAAEVASYTRKAVDERPDLTIVGDAVYDAKAFRDEHPGGAHFVSLFGGRDATEAFMEYHRRAWPKARMSKFFVGSLDASEKPTQADSAYLRLCAEVNALLPKGSGGFAPPSYWLKAAALVVAAVSIEGYMLLRGKTLLLSVFLGLVFAWIGLNIQHDANHGALSRHSVINYCLGYAQDWIGGNMVLWLQEHVVMHHLHTNDVDADPDQKAHGVLRLKPTDGWMPWHALQQLYILPGEAMYAFKLLFLDALELLAWRWEGEKISPLARALFAPAVACKLGFWARFVALPLWLQPTVHTALCICATVCTGSFYLAFFFFISHNFDGVGSVGPKGSLPRSATFVQRQVETSSNVGGYWLGVLNGGLNFQIEHHLFPRLHHSYYAQIAPVVRTHIEKLGFKYRHFPTVGSNLSSMLQHMGKMGTRPGAEKGGKAE.

Positions 11-91 (VAELRAAEVA…MSKFFVGSLD (81 aa)) constitute a Cytochrome b5 heme-binding domain. Residues H50 and H73 each coordinate heme. 2 helical membrane-spanning segments follow: residues 126 to 146 (YWLK…YMLL) and 148 to 168 (GKTL…GLNI). The Histidine box-1 motif lies at 170–174 (HDANH). The Histidine box-2 motif lies at 205 to 210 (HVVMHH). The next 3 membrane-spanning stretches (helical) occupy residues 247 to 267 (ILPG…LELL), 283 to 303 (LFAP…ALPL), and 312 to 332 (ALCI…FFFI). Residues 380 to 384 (QIEHH) carry the Histidine box-3 motif.

It belongs to the fatty acid desaturase type 1 family. Fe(2+) serves as cofactor.

It localises to the membrane. The enzyme catalyses a (7Z,10Z,13Z,16Z,19Z)-docosapentaenoyl-containing glycerolipid + 2 Fe(II)-[cytochrome b5] + O2 + 2 H(+) = a (4Z,7Z,10Z,13Z,16Z,19Z)-docosahexaenoyl-containing glycerolipid + 2 Fe(III)-[cytochrome b5] + 2 H2O. It carries out the reaction a (7Z,10Z,13Z,16Z)-docosatetraenoyl-containing glycerolipid + 2 Fe(II)-[cytochrome b5] + O2 + 2 H(+) = a (4Z,7Z,10Z,13Z,16Z)-docosapentaenoyl-containing glycerolipid + 2 Fe(III)-[cytochrome b5] + 2 H2O. In terms of biological role, fatty acid desaturase that introduces a cis double bond at the 4-position in 22-carbon polyunsaturated fatty acids that contain a Delta(7) double bond, resulting in the production of delta-4 desaturated fatty acid docosahexanoic acid (DHA). Mediates desaturation of 22:5n-3 and 22:4n-6 into 22:6n-3 and 22:5n-6 respectively. The chain is Acyl-lipid (7-3)-desaturase from Diacronema lutheri (Unicellular marine alga).